The primary structure comprises 185 residues: Ribonuclease HII (185 aa).

The RNase H type-2 domain maps to 1 to 185 (MIILGIDEAG…KSYKPIQLLL (185 aa)). Positions 7, 8, and 99 each coordinate a divalent metal cation.

Belongs to the RNase HII family. Mn(2+) serves as cofactor. The cofactor is Mg(2+).

The protein localises to the cytoplasm. It carries out the reaction Endonucleolytic cleavage to 5'-phosphomonoester.. Its function is as follows. Endonuclease that specifically degrades the RNA of RNA-DNA hybrids. The protein is Ribonuclease HII of Francisella tularensis subsp. novicida (strain U112).